Consider the following 310-residue polypeptide: tRNA uridine(34) hydroxylase (310 aa).

Residues 127–225 (KNQNTIVIDT…YLDDIPKEKN (99 aa)) form the Rhodanese domain. Cys-185 functions as the Cysteine persulfide intermediate in the catalytic mechanism.

It belongs to the TrhO family.

The enzyme catalyses uridine(34) in tRNA + AH2 + O2 = 5-hydroxyuridine(34) in tRNA + A + H2O. Catalyzes oxygen-dependent 5-hydroxyuridine (ho5U) modification at position 34 in tRNAs. This Prochlorococcus marinus (strain MIT 9312) protein is tRNA uridine(34) hydroxylase.